Here is an 838-residue protein sequence, read N- to C-terminus: Leucine--tRNA ligase (838 aa).

A 'HIGH' region motif is present at residues 36-46 (PYPSGKIHMGH). The 'KMSKS' region motif lies at 611 to 615 (KMSKS). Residue Lys614 coordinates ATP.

The protein belongs to the class-I aminoacyl-tRNA synthetase family.

The protein resides in the cytoplasm. The enzyme catalyses tRNA(Leu) + L-leucine + ATP = L-leucyl-tRNA(Leu) + AMP + diphosphate. The polypeptide is Leucine--tRNA ligase (Wolbachia pipientis wMel).